Reading from the N-terminus, the 199-residue chain is uncharacterized protein (199 aa).

The 132-residue stretch at 38–169 folds into the Nudix hydrolase domain; sequence NRRAAVLIPI…SLDIHREGIN (132 aa). The short motif at 76–98 is the Nudix box element; sequence GKADPDDQSLISTALREAEEEVA. Glu-92 and Glu-96 together coordinate Mg(2+).

It belongs to the Nudix hydrolase family. PCD1 subfamily. The cofactor is Mn(2+). Requires Mg(2+) as cofactor.

Functionally, probably mediates the hydrolysis of some nucleoside diphosphate derivatives. This is an uncharacterized protein from Yersinia pseudotuberculosis serotype I (strain IP32953).